Reading from the N-terminus, the 510-residue chain is Maturase K (510 aa).

This sequence belongs to the intron maturase 2 family. MatK subfamily.

The protein localises to the plastid. Its subcellular location is the chloroplast. Its function is as follows. Usually encoded in the trnK tRNA gene intron. Probably assists in splicing its own and other chloroplast group II introns. The chain is Maturase K from Populus nigra (Lombardy poplar).